An 804-amino-acid polypeptide reads, in one-letter code: Phenylalanine--tRNA ligase beta subunit (804 aa).

The region spanning 40–161 (FSMIDYLIIG…KANLGDTEVY (122 aa)) is the tRNA-binding domain. A B5 domain is found at 413-486 (EYHQQVKVNY…KILNINLFQP (74 aa)). The Mg(2+) site is built by Asp-464, Asp-470, Glu-473, and Glu-474. The region spanning 710 to 804 (DHYQEVTRDI…DLMKTKQILI (95 aa)) is the FDX-ACB domain.

It belongs to the phenylalanyl-tRNA synthetase beta subunit family. Type 1 subfamily. As to quaternary structure, tetramer of two alpha and two beta subunits. The cofactor is Mg(2+).

It is found in the cytoplasm. It catalyses the reaction tRNA(Phe) + L-phenylalanine + ATP = L-phenylalanyl-tRNA(Phe) + AMP + diphosphate + H(+). In Mycoplasmoides gallisepticum (strain R(low / passage 15 / clone 2)) (Mycoplasma gallisepticum), this protein is Phenylalanine--tRNA ligase beta subunit.